A 176-amino-acid polypeptide reads, in one-letter code: Ubiquinol-cytochrome c reductase iron-sulfur subunit (176 aa).

A helical membrane pass occupies residues Phe15–Ile36. In terms of domain architecture, Rieske spans Ala87–Gln174. Residues Cys119, His121, Cys138, and His141 each contribute to the [2Fe-2S] cluster site. Cys124 and Cys140 are joined by a disulfide.

The protein belongs to the Rieske iron-sulfur protein family. As to quaternary structure, the main subunits of complex b-c1 are: cytochrome b, cytochrome c1 and the Rieske protein. It depends on [2Fe-2S] cluster as a cofactor.

The protein resides in the cell membrane. It catalyses the reaction a quinol + 2 Fe(III)-[cytochrome c](out) = a quinone + 2 Fe(II)-[cytochrome c](out) + 2 H(+)(out). Its function is as follows. Component of the ubiquinol-cytochrome c reductase complex (complex III or cytochrome b-c1 complex), which is a respiratory chain that generates an electrochemical potential coupled to ATP synthesis. The protein is Ubiquinol-cytochrome c reductase iron-sulfur subunit (petA) of Bradyrhizobium diazoefficiens (strain JCM 10833 / BCRC 13528 / IAM 13628 / NBRC 14792 / USDA 110).